The sequence spans 923 residues: Neuropilin-1a (923 aa).

The signal sequence occupies residues 1–19 (MHCGLVLILFTGIFLIVSA). The Extracellular portion of the chain corresponds to 20–856 (LKNDKCGDNI…AGNMLKTLDP (837 aa)). 3 disulfides stabilise this stretch: Cys-25/Cys-52, Cys-80/Cys-102, and Cys-145/Cys-171. CUB domains are found at residues 25-139 (CGDN…YEIF) and 145-263 (CSRN…FTVL). A glycan (N-linked (GlcNAc...) asparagine) is linked at Asn-148. Residues Glu-193, Asp-207, and Asp-248 each contribute to the Ca(2+) site. A disulfide bond links Cys-204 and Cys-226. An N-linked (GlcNAc...) asparagine glycan is attached at Asn-259. Cystine bridges form between Cys-273–Cys-422 and Cys-429–Cys-581. F5/8 type C domains follow at residues 273 to 422 (CTEP…VYGC) and 429 to 581 (CSGM…LLGC). A glycan (N-linked (GlcNAc...) asparagine) is linked at Asn-520. The segment at 587–624 (TVPPTTPAASTTPSDECDDDQANCHSGTGDGYDQTGGT) is disordered. Ser-612 is a glycosylation site (O-linked (Xyl...) (chondroitin sulfate) serine; alternate). Residue Ser-612 is glycosylated (O-linked (Xyl...) (heparan sulfate) serine; alternate). The MAM domain maps to 642-811 (FACDFGWAND…DNVNMADCKD (170 aa)). The helical transmembrane segment at 857–877 (ILITIIAMSALGVFLGAICGV) threads the bilayer. At 878–923 (VLYCACSHSGMSDRNLSALENYNFELVDGVKLKKDKLNSQNSYSEA) the chain is on the cytoplasmic side.

Belongs to the neuropilin family.

It localises to the membrane. Its function is as follows. Receptor involved in the development of the cardiovascular system, in angiogenesis, in the formation of certain neuronal circuits and in organogenesis outside the nervous system. It mediates the chemorepulsant activity of semaphorins. Regulates angiogenesis through a VEGF-dependent pathway. This Danio rerio (Zebrafish) protein is Neuropilin-1a (nrp1a).